Consider the following 571-residue polypeptide: Urease subunit alpha (571 aa).

The Ni(2+) site is built by His-138, His-140, and Lys-221. Residue Lys-221 is modified to N6-carboxylysine. Position 223 (His-223) interacts with substrate. 2 residues coordinate Ni(2+): His-250 and His-276. His-324 serves as the catalytic Proton donor. Asp-364 serves as a coordination point for Ni(2+).

It belongs to the metallo-dependent hydrolases superfamily. Urease alpha subunit family. Heterotrimer of UreA (gamma), UreB (beta) and UreC (alpha) subunits. Three heterotrimers associate to form the active enzyme. Ni cation serves as cofactor. Carboxylation allows a single lysine to coordinate two nickel ions.

It localises to the cytoplasm. The catalysed reaction is urea + 2 H2O + H(+) = hydrogencarbonate + 2 NH4(+). Its pathway is nitrogen metabolism; urea degradation; CO(2) and NH(3) from urea (urease route): step 1/1. The chain is Urease subunit alpha from Staphylococcus aureus (strain JH9).